A 123-amino-acid chain; its full sequence is Small ribosomal subunit protein uS12 (123 aa).

The segment at 1–22 (MATINQLVRQPRKRSVEKSDVP) is disordered. 3-methylthioaspartic acid is present on Asp89. Residues 100 to 123 (GSLDTSGVKGRNQGRSKYGTKRPK) are disordered. Basic residues predominate over residues 111 to 123 (NQGRSKYGTKRPK).

This sequence belongs to the universal ribosomal protein uS12 family. Part of the 30S ribosomal subunit. Contacts proteins S8 and S17. May interact with IF1 in the 30S initiation complex.

With S4 and S5 plays an important role in translational accuracy. Its function is as follows. Interacts with and stabilizes bases of the 16S rRNA that are involved in tRNA selection in the A site and with the mRNA backbone. Located at the interface of the 30S and 50S subunits, it traverses the body of the 30S subunit contacting proteins on the other side and probably holding the rRNA structure together. The combined cluster of proteins S8, S12 and S17 appears to hold together the shoulder and platform of the 30S subunit. The sequence is that of Small ribosomal subunit protein uS12 from Pseudomonas entomophila (strain L48).